The chain runs to 324 residues: Ribose 1,5-bisphosphate isomerase (324 aa).

Substrate contacts are provided by residues 22–25 (RGAG) and R65. The Proton acceptor role is filled by C135. 137-139 (SKA) is a binding site for substrate. The active-site Proton donor is D204. Residues 214-215 (NK) and K240 contribute to the substrate site.

This sequence belongs to the eIF-2B alpha/beta/delta subunits family. R15P isomerase subfamily.

It carries out the reaction alpha-D-ribose 1,5-bisphosphate = D-ribulose 1,5-bisphosphate. Catalyzes the isomerization of ribose 1,5-bisphosphate (R15P) to ribulose 1,5-bisphosphate (RuBP), the CO(2) acceptor and substrate for RubisCO. Functions in an archaeal AMP degradation pathway, together with AMP phosphorylase and RubisCO. This chain is Ribose 1,5-bisphosphate isomerase, found in Pyrococcus horikoshii (strain ATCC 700860 / DSM 12428 / JCM 9974 / NBRC 100139 / OT-3).